The primary structure comprises 86 residues: Evasin-3 (86 aa).

Residues 1–20 (MRALLARLLLCVLVVSDSKG) form the signal peptide. Cystine bridges form between Cys42–Cys57, Cys46–Cys59, and Cys53–Cys70. Asn45 carries an N-linked (GlcNAc...) asparagine glycan. Asn76 is a glycosylation site (N-linked (GlcNAc...) asparagine).

Monomer.

It localises to the secreted. In terms of biological role, salivary chemokine-binding protein which shows chemokine neutralizing activity and binds to host chemokines CXCL1, CXCL2, CXCL3, CXCL5, CXCL6 and CXCL8. Binds to CXCL8 with 1:1 stoichiometry. Disrupts CXCL8 homodimer formation, disrupts the glycosaminoglycan-binding site of CXCL8 and inhibits the interaction of CXCL8 with CXCR2. In Rhipicephalus sanguineus (Brown dog tick), this protein is Evasin-3.